Consider the following 652-residue polypeptide: Putative asparagine synthetase [glutamine-hydrolyzing] (652 aa).

Cys2 serves as the catalytic For GATase activity. In terms of domain architecture, Glutamine amidotransferase type-2 spans 2 to 231 (CGLLAFVAAP…SGCFARIRAD (230 aa)). Residues 60–64 (RLSII), 89–91 (NGE), and Asp115 each bind L-glutamine. Position 382-383 (382-383 (SG)) interacts with ATP.

It belongs to the asparagine synthetase family.

It catalyses the reaction L-aspartate + L-glutamine + ATP + H2O = L-asparagine + L-glutamate + AMP + diphosphate + H(+). Its pathway is amino-acid biosynthesis; L-asparagine biosynthesis; L-asparagine from L-aspartate (L-Gln route): step 1/1. The polypeptide is Putative asparagine synthetase [glutamine-hydrolyzing] (asnB) (Mycobacterium bovis (strain ATCC BAA-935 / AF2122/97)).